Here is a 441-residue protein sequence, read N- to C-terminus: MSGSLWLSLALSLAVLAQFKVSAAPNLVCFYDSQGSQRQGLAQFSITDIELALQFCTHLVYGYAGVNADNFEMQSINKRLDLEQRHLAQVTSMKERYPHIKFLLSVGGDADTNEGNQYIKLLESGQQGHRRFIESARDLVRRYNFDGLDLALQLPRNKPRKVHGDVGSAWKSFKKFFTGDYIVDTESETHKGQVTALIKDLSAALKQNDLLLSLTVLPNVNSSWYYDAPSIAPSLDFINLGTFDFLTPQRNPEEADFSAPTYEAVGQNRLGHYNLNFQMEHWLLQRVPANKINIGIATYGRTWKMSKDSGDSGMPVVSSTQGPAPAGPQSKQEGLLNWAEICSLMPNPSNSNARGPNAPVKRVVDPTKRYGSYAFRAADENGDHGLWISYDDPDSGSSKAMYARARNLGGVALFDLTQDDFRGQCTGDRFPMLRAIKYRLL.

A signal peptide spans 1–23; the sequence is MSGSLWLSLALSLAVLAQFKVSA. In terms of domain architecture, GH18 spans 25–441; the sequence is PNLVCFYDSQ…MLRAIKYRLL (417 aa). The cysteines at positions 29 and 56 are disulfide-linked. An N-linked (GlcNAc...) asparagine glycan is attached at N221. The tract at residues 310–331 is disordered; the sequence is GDSGMPVVSSTQGPAPAGPQSK. An intrachain disulfide couples C342 to C425.

Belongs to the glycosyl hydrolase 18 family. IDGF subfamily. Post-translationally, glycosylated.

The protein localises to the secreted. Cooperates with insulin-like peptides to stimulate the proliferation, polarization and motility of imaginal disk cells. May act by stabilizing the binding of insulin-like peptides to its receptor through a simultaneous interaction with both molecules to form a multiprotein signaling complex. This Drosophila simulans (Fruit fly) protein is Chitinase-like protein Idgf3 (Idgf3).